A 239-amino-acid polypeptide reads, in one-letter code: Large ribosomal subunit protein uL2 (239 aa).

Residues 203 to 239 form a disordered region; the sequence is PFGGKEHHPGKPTTTSRRAPPGRKVGHIAARRTGRRK. Residues 222–239 show a composition bias toward basic residues; it reads PPGRKVGHIAARRTGRRK.

The protein belongs to the universal ribosomal protein uL2 family. In terms of assembly, part of the 50S ribosomal subunit. Forms a bridge to the 30S subunit in the 70S ribosome.

Functionally, one of the primary rRNA binding proteins. Required for association of the 30S and 50S subunits to form the 70S ribosome, for tRNA binding and peptide bond formation. It has been suggested to have peptidyltransferase activity; this is somewhat controversial. Makes several contacts with the 16S rRNA in the 70S ribosome. The chain is Large ribosomal subunit protein uL2 from Pyrococcus abyssi (strain GE5 / Orsay).